We begin with the raw amino-acid sequence, 461 residues long: MLKIFNTLTRQKEEFKPIHAGEVGMYVCGITVYDLCHIGHGRTFVAFDVVARYLRFLGYKLKYVRNITDIDDKIIKRANENGESFVALVDRMIAEMHKDFDALNILRPDMEPRATHHIAEIIELTEQLIAKGHAYAADNGDVMFDVPTDPTYGVLSRQDLDQLQAGARVDVVDDKRNPMDFVLWKMSKEGEPSWPSPWGAGRPGWHIECSAMNCKQLGNHFDIHGGGSDLMFPHHENEIAQSTCAHDGQYVNYWMHSGMVMVDREKMSKSLGNFFTVRDVLKYYDAETVRYFLMSGHYRSQLNYSEENLKQARAALERLYTALRGTEKTVAPAGGEAFEARFIEAMDDDFNTPEAYSVLFDMAREVNRLKAEDMAAANAMASHLRKLSAVLGLLEQEPEAFLQSGAQADDSEVAEIEALIQQRLDARKAKDWAAADAARDRLNEMGIVLEDGPQGTTWRRK.

Cysteine 28 contributes to the Zn(2+) binding site. Positions 30 to 40 (ITVYDLCHIGH) match the 'HIGH' region motif. 3 residues coordinate Zn(2+): cysteine 209, histidine 234, and glutamate 238. The 'KMSKS' region signature appears at 266–270 (KMSKS). Lysine 269 lines the ATP pocket.

It belongs to the class-I aminoacyl-tRNA synthetase family. As to quaternary structure, monomer. The cofactor is Zn(2+).

Its subcellular location is the cytoplasm. The enzyme catalyses tRNA(Cys) + L-cysteine + ATP = L-cysteinyl-tRNA(Cys) + AMP + diphosphate. This is Cysteine--tRNA ligase from Shigella sonnei (strain Ss046).